A 419-amino-acid polypeptide reads, in one-letter code: L-rhamnose isomerase (419 aa).

Mn(2+) is bound by residues His-262, Asp-294, and Asp-296.

It belongs to the rhamnose isomerase family. In terms of assembly, homotetramer. It depends on Mn(2+) as a cofactor.

Its subcellular location is the cytoplasm. It carries out the reaction L-rhamnopyranose = L-rhamnulose. The protein operates within carbohydrate degradation; L-rhamnose degradation; glycerone phosphate from L-rhamnose: step 1/3. Catalyzes the interconversion of L-rhamnose and L-rhamnulose. The chain is L-rhamnose isomerase from Shigella sonnei (strain Ss046).